The following is a 377-amino-acid chain: Erythronate-4-phosphate dehydrogenase (377 aa).

Positions 45 and 67 each coordinate substrate. Residues 127 to 128 (QV), Asp147, and Thr176 each bind NAD(+). Arg209 is a catalytic residue. Asp233 serves as a coordination point for NAD(+). Residue Glu238 is part of the active site. His255 (proton donor) is an active-site residue. Position 258 (Gly258) interacts with NAD(+). Tyr259 contacts substrate.

This sequence belongs to the D-isomer specific 2-hydroxyacid dehydrogenase family. PdxB subfamily. In terms of assembly, homodimer.

The protein resides in the cytoplasm. The catalysed reaction is 4-phospho-D-erythronate + NAD(+) = (R)-3-hydroxy-2-oxo-4-phosphooxybutanoate + NADH + H(+). It functions in the pathway cofactor biosynthesis; pyridoxine 5'-phosphate biosynthesis; pyridoxine 5'-phosphate from D-erythrose 4-phosphate: step 2/5. Catalyzes the oxidation of erythronate-4-phosphate to 3-hydroxy-2-oxo-4-phosphonooxybutanoate. This chain is Erythronate-4-phosphate dehydrogenase, found in Vibrio vulnificus (strain YJ016).